The sequence spans 552 residues: DNA ligase (552 aa).

Residue Glu-229 participates in ATP binding. Lys-231 acts as the N6-AMP-lysine intermediate in catalysis. Residues Arg-236 and Glu-283 each contribute to the ATP site. Mg(2+) is bound by residues Glu-283 and Glu-377. Positions 382 and 397 each coordinate ATP.

This sequence belongs to the ATP-dependent DNA ligase family. Interacts with host TOP2A and TOP2B. Mg(2+) is required as a cofactor.

The protein localises to the host cytoplasm. It catalyses the reaction ATP + (deoxyribonucleotide)n-3'-hydroxyl + 5'-phospho-(deoxyribonucleotide)m = (deoxyribonucleotide)n+m + AMP + diphosphate.. In terms of biological role, DNA ligase that seals nicks in double-stranded DNA during DNA replication, DNA recombination and DNA repair. Recruits cellular topoisomerase II to sites of viral replication and assembly. The polypeptide is DNA ligase (OPG180) (Vaccinia virus (strain Copenhagen) (VACV)).